Reading from the N-terminus, the 134-residue chain is Large ribosomal subunit protein uL16c (134 aa).

The segment at 1–22 (MLSPKRTRFRKQHRGRMKGISH) is disordered.

Belongs to the universal ribosomal protein uL16 family. In terms of assembly, part of the 50S ribosomal subunit.

It is found in the plastid. It localises to the chloroplast. This Nicotiana tomentosiformis (Tobacco) protein is Large ribosomal subunit protein uL16c.